The primary structure comprises 342 residues: Holliday junction branch migration complex subunit RuvB (342 aa).

The segment at 1 to 184 (MEENFDIREQ…FGINLHLEYY (184 aa)) is large ATPase domain (RuvB-L). ATP-binding positions include Leu-23, Arg-24, Gly-65, Lys-68, Thr-69, Thr-70, 131-133 (EDY), Arg-174, Tyr-184, and Arg-221. Thr-69 contacts Mg(2+). The interval 185–255 (DDDVLTSIIR…IARFALEALN (71 aa)) is small ATPAse domain (RuvB-S). The head domain (RuvB-H) stretch occupies residues 258-342 (RYGLDEIDNK…YNSQKTLFDD (85 aa)). The DNA site is built by Arg-313 and Arg-318.

This sequence belongs to the RuvB family. In terms of assembly, homohexamer. Forms an RuvA(8)-RuvB(12)-Holliday junction (HJ) complex. HJ DNA is sandwiched between 2 RuvA tetramers; dsDNA enters through RuvA and exits via RuvB. An RuvB hexamer assembles on each DNA strand where it exits the tetramer. Each RuvB hexamer is contacted by two RuvA subunits (via domain III) on 2 adjacent RuvB subunits; this complex drives branch migration. In the full resolvosome a probable DNA-RuvA(4)-RuvB(12)-RuvC(2) complex forms which resolves the HJ.

The protein localises to the cytoplasm. It catalyses the reaction ATP + H2O = ADP + phosphate + H(+). Functionally, the RuvA-RuvB-RuvC complex processes Holliday junction (HJ) DNA during genetic recombination and DNA repair, while the RuvA-RuvB complex plays an important role in the rescue of blocked DNA replication forks via replication fork reversal (RFR). RuvA specifically binds to HJ cruciform DNA, conferring on it an open structure. The RuvB hexamer acts as an ATP-dependent pump, pulling dsDNA into and through the RuvAB complex. RuvB forms 2 homohexamers on either side of HJ DNA bound by 1 or 2 RuvA tetramers; 4 subunits per hexamer contact DNA at a time. Coordinated motions by a converter formed by DNA-disengaged RuvB subunits stimulates ATP hydrolysis and nucleotide exchange. Immobilization of the converter enables RuvB to convert the ATP-contained energy into a lever motion, pulling 2 nucleotides of DNA out of the RuvA tetramer per ATP hydrolyzed, thus driving DNA branch migration. The RuvB motors rotate together with the DNA substrate, which together with the progressing nucleotide cycle form the mechanistic basis for DNA recombination by continuous HJ branch migration. Branch migration allows RuvC to scan DNA until it finds its consensus sequence, where it cleaves and resolves cruciform DNA. This chain is Holliday junction branch migration complex subunit RuvB, found in Phocaeicola vulgatus (strain ATCC 8482 / DSM 1447 / JCM 5826 / CCUG 4940 / NBRC 14291 / NCTC 11154) (Bacteroides vulgatus).